Here is a 112-residue protein sequence, read N- to C-terminus: Putative pterin-4-alpha-carbinolamine dehydratase (112 aa).

It belongs to the pterin-4-alpha-carbinolamine dehydratase family.

The catalysed reaction is (4aS,6R)-4a-hydroxy-L-erythro-5,6,7,8-tetrahydrobiopterin = (6R)-L-erythro-6,7-dihydrobiopterin + H2O. The protein is Putative pterin-4-alpha-carbinolamine dehydratase of Dechloromonas aromatica (strain RCB).